Consider the following 103-residue polypeptide: Translation initiation factor 1A (103 aa).

In terms of domain architecture, S1-like spans 11 to 86; that stretch reads TRVRTPRENE…EKCDVIWRYT (76 aa).

The protein belongs to the eIF-1A family.

Seems to be required for maximal rate of protein biosynthesis. Enhances ribosome dissociation into subunits and stabilizes the binding of the initiator Met-tRNA(I) to 40 S ribosomal subunits. This chain is Translation initiation factor 1A (eIF1A), found in Methanococcus maripaludis (strain C5 / ATCC BAA-1333).